Consider the following 340-residue polypeptide: tRNA dimethylallyltransferase (340 aa).

Positions 1–25 (MDQNRSPNGRDCREPPSPSSTARPG) are disordered. Position 31 to 38 (31 to 38 (GPTATGKS)) interacts with ATP. Residue 33 to 38 (TATGKS) participates in substrate binding. An interaction with substrate tRNA region spans residues 56–59 (DSRQ).

It belongs to the IPP transferase family. As to quaternary structure, monomer. Requires Mg(2+) as cofactor.

It catalyses the reaction adenosine(37) in tRNA + dimethylallyl diphosphate = N(6)-dimethylallyladenosine(37) in tRNA + diphosphate. Catalyzes the transfer of a dimethylallyl group onto the adenine at position 37 in tRNAs that read codons beginning with uridine, leading to the formation of N6-(dimethylallyl)adenosine (i(6)A). This is tRNA dimethylallyltransferase from Synechococcus sp. (strain JA-3-3Ab) (Cyanobacteria bacterium Yellowstone A-Prime).